Consider the following 280-residue polypeptide: HCLS1-associated protein X-1 (280 aa).

The residue at position 2 (Ser2) is an N-acetylserine. The segment at 2-45 (SVFDLFRGFFGFPGPRSHRDPFFGGMTRDDDDDDDDDDEAEEDR) is required for localization in mitochondria. Disordered regions lie at residues 12 to 70 (GFPG…SFSP) and 100 to 263 (TLPS…SALD). The segment covering 30–43 (DDDDDDDDDDEAEE) has biased composition (acidic residues). Residues 115–280 (TPGERLREGQ…LLLGRWFRSR (166 aa)) form an involved in HCLS1 binding region. Basic and acidic residues-rich tracts occupy residues 116–125 (PGERLREGQT) and 134–154 (PDSH…KPES). Residues 176–207 (VSPHSRAKEDKDLDSQVSQEGLGPLLQPQPKS) are involved in CASP9 binding. Positions 177 to 248 (SPHSRAKEDK…TTVTHQEAHD (72 aa)) are involved in GNA13 binding. The interval 184–280 (EDKDLDSQVS…LLLGRWFRSR (97 aa)) is required for localization in sarcoplasmic reticulum. The segment at 185–280 (DKDLDSQVSQ…LLLGRWFRSR (96 aa)) is involved in PKD2 binding. 2 positions are modified to phosphoserine: Ser190 and Ser193. The segment at 204 to 226 (QPKSYFKSISVTKITKPDGTVEE) is involved in PLN binding. The involved in ATP2A2 binding stretch occupies residues 204-246 (QPKSYFKSISVTKITKPDGTVEERRTVVDSEGRRETTVTHQEA). The tract at residues 211 to 280 (SISVTKITKP…LLLGRWFRSR (70 aa)) is mediates interaction with UCP3. Residues 218–256 (TKPDGTVEERRTVVDSEGRRETTVTHQEAHDSSRSDPDS) show a composition bias toward basic and acidic residues. The segment at 271–280 (LLLGRWFRSR) is required for ITGB6 binding.

The protein belongs to the HAX1 family. As to quaternary structure, interacts with ABCB1, ABCB4 and ABCB11. Directly associates with HCLS1/HS1, through binding to its N-terminal region. Interacts with CTTN. Interacts with PKD2. Interacts with GNA13. Interacts with CASP9. Interacts with ITGB6. Interacts with PLN and ATP2A2; these interactions are inhibited by calcium. Interacts with GRB7. Interacts (via C-terminus) with XIAP/BIRC4 (via BIR 2 domain and BIR 3 domain) and this interaction blocks ubiquitination of XIAP/BIRC4. Interacts with TPC2. Interacts with KCNC3. Interacts with XPO1. Interacts with RNF217. Interacts with UCP3; the interaction is direct and calcium-dependent. Interacts with MAPRE2; this interaction regulates cell migration in keratinocytes. In terms of tissue distribution, ubiquitous, with highest levels in kidney and liver (at protein level).

Its subcellular location is the mitochondrion matrix. It is found in the endoplasmic reticulum. The protein localises to the nucleus membrane. The protein resides in the cytoplasmic vesicle. It localises to the cytoplasm. Its subcellular location is the cell cortex. It is found in the cell membrane. The protein localises to the sarcoplasmic reticulum. The protein resides in the P-body. It localises to the nucleus. Its function is as follows. Recruits the Arp2/3 complex to the cell cortex and regulates reorganization of the cortical actin cytoskeleton via its interaction with KCNC3 and the Arp2/3 complex. Slows down the rate of inactivation of KCNC3 channels. Promotes GNA13-mediated cell migration. Involved in the clathrin-mediated endocytosis pathway. May be involved in internalization of ABC transporters such as ABCB11. May inhibit CASP9 and CASP3. Promotes cell survival. May regulate intracellular calcium pools. The polypeptide is HCLS1-associated protein X-1 (Hax1) (Mus musculus (Mouse)).